The following is a 381-amino-acid chain: Dual specificity protein phosphatase 6 (381 aa).

One can recognise a Rhodanese domain in the interval 30–148 (GNERLLLMDC…FQAEFALHCE (119 aa)). The segment at 176-203 (SSSDIESDLDRDPNSATDSDGSPLSNSQ) is disordered. The span at 189-203 (NSATDSDGSPLSNSQ) shows a compositional bias: polar residues. Positions 206–349 (FPVEILPFLY…LLDFERTLGL (144 aa)) constitute a Tyrosine-protein phosphatase domain. Cys-293 functions as the Phosphocysteine intermediate in the catalytic mechanism.

This sequence belongs to the protein-tyrosine phosphatase family. Non-receptor class dual specificity subfamily. Interacts with MAPK1/ERK2. In terms of processing, ubiquitinated by the SCF(FBXO31) complex, leading to its proteasomal degradation.

Its subcellular location is the cytoplasm. It carries out the reaction O-phospho-L-tyrosyl-[protein] + H2O = L-tyrosyl-[protein] + phosphate. It catalyses the reaction O-phospho-L-seryl-[protein] + H2O = L-seryl-[protein] + phosphate. The catalysed reaction is O-phospho-L-threonyl-[protein] + H2O = L-threonyl-[protein] + phosphate. Dual specificity protein phosphatase, which mediates dephosphorylation and inactivation of MAP kinases. Has a specificity for the ERK family. Plays an important role in alleviating acute postoperative pain. Necessary for the normal dephosphorylation of the long-lasting phosphorylated forms of spinal MAPK1/3 and MAP kinase p38 induced by peripheral surgery, which drives the resolution of acute postoperative allodynia. Also important for dephosphorylation of MAPK1/3 in local wound tissue, which further contributes to resolution of acute pain. In Mus musculus (Mouse), this protein is Dual specificity protein phosphatase 6 (Dusp6).